The chain runs to 631 residues: 1-deoxy-D-xylulose-5-phosphate synthase (631 aa).

Positions 1–21 (MPTTFHEIPRERPLTPLLDSA) are disordered. Residues H87 and 128-130 (GHS) contribute to the thiamine diphosphate site. Mg(2+) is bound at residue D159. Thiamine diphosphate-binding positions include 160-161 (GA), N188, F295, and E377. N188 is a Mg(2+) binding site.

This sequence belongs to the transketolase family. DXPS subfamily. Homodimer. The cofactor is Mg(2+). Thiamine diphosphate serves as cofactor.

It catalyses the reaction D-glyceraldehyde 3-phosphate + pyruvate + H(+) = 1-deoxy-D-xylulose 5-phosphate + CO2. Its pathway is metabolic intermediate biosynthesis; 1-deoxy-D-xylulose 5-phosphate biosynthesis; 1-deoxy-D-xylulose 5-phosphate from D-glyceraldehyde 3-phosphate and pyruvate: step 1/1. Functionally, catalyzes the acyloin condensation reaction between C atoms 2 and 3 of pyruvate and glyceraldehyde 3-phosphate to yield 1-deoxy-D-xylulose-5-phosphate (DXP). This Ectopseudomonas mendocina (strain ymp) (Pseudomonas mendocina) protein is 1-deoxy-D-xylulose-5-phosphate synthase.